The sequence spans 335 residues: Atypical chemokine receptor 1 (335 aa).

Residues 1-62 (MGNCLHPAEL…CNLLDDSALP (62 aa)) are Extracellular-facing. N16, N26, and N32 each carry an N-linked (GlcNAc...) asparagine glycan. 2 disulfides stabilise this stretch: C50/C275 and C128/C194. A helical membrane pass occupies residues 63 to 83 (FFILVSVLGILASGTVLFMFF). At 84–94 (RPLFHWQLCPG) the chain is on the cytoplasmic side. Residues 95 to 115 (WPVLAQLAVGSALFSIVVPIL) traverse the membrane as a helical segment. Residues 116–128 (APGLGNTRSSALC) are Extracellular-facing. Residues 129–152 (SLGYCVWYGSAFAQALLLGCHASL) form a helical membrane-spanning segment. At 153 to 165 (GPKLGAGQVPGLT) the chain is on the cytoplasmic side. A helical membrane pass occupies residues 166 to 186 (LGLSVGLWGVAALLTLPITLA). At 187–206 (SGASGGLCTPAYSMELKALQ) the chain is on the extracellular side. Residues 207–227 (ATHAVACLAVFVLLPLGLFGA) form a helical membrane-spanning segment. Topologically, residues 228–243 (KGLKKALGMGPGPWMN) are cytoplasmic. Residues 244–264 (ILWAWFIFWWPHGVVLGLDFL) traverse the membrane as a helical segment. The Extracellular segment spans residues 265–286 (VRSKLLLLSTCLAQQALDLLLN). A helical transmembrane segment spans residues 287-307 (LAEALAILHCVATPLLLALFC). Residues 308 to 335 (HQATRTLLPSLPLPEGWSSHLDTLGSES) lie on the Cytoplasmic side of the membrane.

This sequence belongs to the G-protein coupled receptor 1 family. Atypical chemokine receptor subfamily. (Microbial infection) Interacts (via N-terminal extracellular domain) with Plasmodium knowlesi Duffy receptor alpha form (DBPalpha) (via region II).

The protein resides in the early endosome. Its subcellular location is the recycling endosome. It localises to the membrane. Its function is as follows. Atypical chemokine receptor that controls chemokine levels and localization via high-affinity chemokine binding that is uncoupled from classic ligand-driven signal transduction cascades, resulting instead in chemokine sequestration, degradation, or transcytosis. Also known as interceptor (internalizing receptor) or chemokine-scavenging receptor or chemokine decoy receptor. Has a promiscuous chemokine-binding profile, interacting with inflammatory chemokines of both the CXC and the CC subfamilies but not with homeostatic chemokines. Acts as a receptor for chemokines including CCL2, CCL5, CCL7, CCL11, CCL13, CCL14, CCL17, CXCL5, CXCL6, IL8/CXCL8, CXCL11, GRO, RANTES, MCP-1 and TARC. May regulate chemokine bioavailability and, consequently, leukocyte recruitment through two distinct mechanisms: when expressed in endothelial cells, it sustains the abluminal to luminal transcytosis of tissue-derived chemokines and their subsequent presentation to circulating leukocytes; when expressed in erythrocytes, serves as blood reservoir of cognate chemokines but also as a chemokine sink, buffering potential surges in plasma chemokine levels. (Microbial infection) Acts as a receptor for the malaria parasite Plasmodium knowlesi. The sequence is that of Atypical chemokine receptor 1 (ACKR1) from Macaca mulatta (Rhesus macaque).